Here is a 136-residue protein sequence, read N- to C-terminus: uncharacterized protein (136 aa).

Residues 1–51 are disordered; that stretch reads MAANATSGRPPSIALRQPEATGWRRGIPAKVATKGTQAEREGDVRSGGRAR. Residues 37 to 46 show a composition bias toward basic and acidic residues; it reads QAEREGDVRS.

This is an uncharacterized protein from Homo sapiens (Human).